The following is a 430-amino-acid chain: Adenylosuccinate synthetase (430 aa).

Residues 12 to 18 (GDEGKGK) and 40 to 42 (GHT) each bind GTP. Asp-13 (proton acceptor) is an active-site residue. Asp-13 and Gly-40 together coordinate Mg(2+). IMP contacts are provided by residues 13–16 (DEGK), 38–41 (NAGH), Thr-130, Arg-144, Gln-224, Thr-239, and Arg-303. Catalysis depends on His-41, which acts as the Proton donor. Residue 299–305 (TVTGRKR) participates in substrate binding. GTP is bound by residues Arg-305, 331–333 (KLD), and 413–415 (STS).

This sequence belongs to the adenylosuccinate synthetase family. As to quaternary structure, homodimer. The cofactor is Mg(2+).

Its subcellular location is the cytoplasm. It carries out the reaction IMP + L-aspartate + GTP = N(6)-(1,2-dicarboxyethyl)-AMP + GDP + phosphate + 2 H(+). Its pathway is purine metabolism; AMP biosynthesis via de novo pathway; AMP from IMP: step 1/2. Functionally, plays an important role in the de novo pathway of purine nucleotide biosynthesis. Catalyzes the first committed step in the biosynthesis of AMP from IMP. This Parvibaculum lavamentivorans (strain DS-1 / DSM 13023 / NCIMB 13966) protein is Adenylosuccinate synthetase.